A 172-amino-acid chain; its full sequence is Co-chaperone protein HscB homolog (172 aa).

Positions 2 to 74 constitute a J domain; that stretch reads NYFELFGLVE…LRRAEYLLSL (73 aa).

Belongs to the HscB family. Interacts with HscA and stimulates its ATPase activity.

In terms of biological role, co-chaperone involved in the maturation of iron-sulfur cluster-containing proteins. Seems to help targeting proteins to be folded toward HscA. The protein is Co-chaperone protein HscB homolog of Aeromonas hydrophila subsp. hydrophila (strain ATCC 7966 / DSM 30187 / BCRC 13018 / CCUG 14551 / JCM 1027 / KCTC 2358 / NCIMB 9240 / NCTC 8049).